The sequence spans 130 residues: Small ribosomal subunit protein uS9 (130 aa).

Belongs to the universal ribosomal protein uS9 family.

The sequence is that of Small ribosomal subunit protein uS9 from Vibrio atlanticus (strain LGP32) (Vibrio splendidus (strain Mel32)).